The chain runs to 702 residues: MADS-box MEF2 type transcription factor MIG1 (702 aa).

The MADS-box domain maps to 1–61 (MGRRKIEIKA…KKLYEYSSGD (61 aa)). Disordered regions lie at residues 73–608 (GGAT…NIDT) and 658–702 (PSFL…KVDS). The span at 86 to 96 (GGDDDDEEEGD) shows a compositional bias: acidic residues. Over residues 132-144 (ASPPIPNGVPFPP) the composition is skewed to pro residues. The segment covering 145–155 (HGHGVPRGHTP) has biased composition (low complexity). Positions 180 to 195 (GSPQVNGFGFGQQQSM) are enriched in polar residues. The span at 201–241 (TTMPPHMPPQMAPGPPFPYPQHPQHPPHPPHPPHPPHPQQP) shows a compositional bias: pro residues. Low complexity-rich tracts occupy residues 273 to 284 (PMGMQRHSVSPP), 326 to 343 (ESPQ…QQPE), and 350 to 371 (EQQQ…QSEP). Over residues 456-465 (VDESTSNASE) the composition is skewed to polar residues. Composition is skewed to low complexity over residues 487 to 512 (RASI…SLRA) and 530 to 553 (DGSG…DATS). Residues 554 to 567 (QSTRQNDSHSSTNM) are compositionally biased toward polar residues. Residues 587-600 (PPNPFAPKRPPQHP) are compositionally biased toward pro residues. Residues 693-702 (NEPKRVKVDS) are compositionally biased toward basic and acidic residues.

The protein belongs to the MEF2 family. In terms of assembly, interacts with MAPK MPS1.

The protein resides in the nucleus. Transcription factor acting downstream of the MPS1 MAP kinase (MAPK) cascade during conidiation and plant infection. Required for overcoming plant defense responses and the differentiation of secondary infectious hyphae in live plant cells. The sequence is that of MADS-box MEF2 type transcription factor MIG1 from Pyricularia oryzae (Rice blast fungus).